The chain runs to 229 residues: Ribulose-phosphate 3-epimerase (229 aa).

A substrate-binding site is contributed by serine 12. Positions 37, 39, and 70 each coordinate a divalent metal cation. Aspartate 39 (proton acceptor) is an active-site residue. Substrate is bound by residues histidine 70, 146 to 149 (GFTG), 181 to 183 (DGG), and 203 to 204 (AS). An a divalent metal cation-binding site is contributed by aspartate 181. Aspartate 181 acts as the Proton donor in catalysis.

This sequence belongs to the ribulose-phosphate 3-epimerase family. A divalent metal cation is required as a cofactor.

It catalyses the reaction D-ribulose 5-phosphate = D-xylulose 5-phosphate. It participates in carbohydrate degradation. In terms of biological role, catalyzes the reversible epimerization of D-ribulose 5-phosphate to D-xylulose 5-phosphate. This Chlamydia pneumoniae (Chlamydophila pneumoniae) protein is Ribulose-phosphate 3-epimerase.